Here is a 298-residue protein sequence, read N- to C-terminus: Lipoyl synthase (298 aa).

[4Fe-4S] cluster-binding residues include Cys40, Cys45, Cys51, Cys67, Cys71, Cys74, and Ser280. A Radical SAM core domain is found at 53–269 (AVRRTATFMI…KEIAMAKGFS (217 aa)).

Belongs to the radical SAM superfamily. Lipoyl synthase family. Requires [4Fe-4S] cluster as cofactor.

It is found in the cytoplasm. The catalysed reaction is [[Fe-S] cluster scaffold protein carrying a second [4Fe-4S](2+) cluster] + N(6)-octanoyl-L-lysyl-[protein] + 2 oxidized [2Fe-2S]-[ferredoxin] + 2 S-adenosyl-L-methionine + 4 H(+) = [[Fe-S] cluster scaffold protein] + N(6)-[(R)-dihydrolipoyl]-L-lysyl-[protein] + 4 Fe(3+) + 2 hydrogen sulfide + 2 5'-deoxyadenosine + 2 L-methionine + 2 reduced [2Fe-2S]-[ferredoxin]. Its pathway is protein modification; protein lipoylation via endogenous pathway; protein N(6)-(lipoyl)lysine from octanoyl-[acyl-carrier-protein]. Its function is as follows. Catalyzes the radical-mediated insertion of two sulfur atoms into the C-6 and C-8 positions of the octanoyl moiety bound to the lipoyl domains of lipoate-dependent enzymes, thereby converting the octanoylated domains into lipoylated derivatives. This Bacillus pumilus (strain SAFR-032) protein is Lipoyl synthase.